Reading from the N-terminus, the 477-residue chain is Aspartyl/glutamyl-tRNA(Asn/Gln) amidotransferase subunit B (477 aa).

This sequence belongs to the GatB/GatE family. GatB subfamily. As to quaternary structure, heterotrimer of A, B and C subunits.

The enzyme catalyses L-glutamyl-tRNA(Gln) + L-glutamine + ATP + H2O = L-glutaminyl-tRNA(Gln) + L-glutamate + ADP + phosphate + H(+). It carries out the reaction L-aspartyl-tRNA(Asn) + L-glutamine + ATP + H2O = L-asparaginyl-tRNA(Asn) + L-glutamate + ADP + phosphate + 2 H(+). Its function is as follows. Allows the formation of correctly charged Asn-tRNA(Asn) or Gln-tRNA(Gln) through the transamidation of misacylated Asp-tRNA(Asn) or Glu-tRNA(Gln) in organisms which lack either or both of asparaginyl-tRNA or glutaminyl-tRNA synthetases. The reaction takes place in the presence of glutamine and ATP through an activated phospho-Asp-tRNA(Asn) or phospho-Glu-tRNA(Gln). The chain is Aspartyl/glutamyl-tRNA(Asn/Gln) amidotransferase subunit B from Clostridium tetani (strain Massachusetts / E88).